Consider the following 57-residue polypeptide: MAKAKGNREKIKLVSSANTGHFYTTEKNKRNMPEKMEIKKFDPVVRQHVMYKEAKIK.

It belongs to the bacterial ribosomal protein bL33 family.

This is Large ribosomal subunit protein bL33 from Shewanella halifaxensis (strain HAW-EB4).